A 263-amino-acid polypeptide reads, in one-letter code: Sulfur carrier protein FdhD (263 aa).

Cys107 serves as the catalytic Cysteine persulfide intermediate.

It belongs to the FdhD family.

Its subcellular location is the cytoplasm. Required for formate dehydrogenase (FDH) activity. Acts as a sulfur carrier protein that transfers sulfur from IscS to the molybdenum cofactor prior to its insertion into FDH. The chain is Sulfur carrier protein FdhD from Bacillus licheniformis (strain ATCC 14580 / DSM 13 / JCM 2505 / CCUG 7422 / NBRC 12200 / NCIMB 9375 / NCTC 10341 / NRRL NRS-1264 / Gibson 46).